A 681-amino-acid polypeptide reads, in one-letter code: Phenylalanine--tRNA ligase beta subunit (681 aa).

The B5 domain occupies 288 to 363 (PARETVLLRP…RIHGYDQIPE (76 aa)). Asp341, Asp347, Glu350, and Glu351 together coordinate Mg(2+). Residues 586 to 681 (SSFPSIQRDL…EKQLEAVLLR (96 aa)) form the FDX-ACB domain.

This sequence belongs to the phenylalanyl-tRNA synthetase beta subunit family. Type 1 subfamily. Tetramer of two alpha and two beta subunits. It depends on Mg(2+) as a cofactor.

Its subcellular location is the cytoplasm. The enzyme catalyses tRNA(Phe) + L-phenylalanine + ATP = L-phenylalanyl-tRNA(Phe) + AMP + diphosphate + H(+). The sequence is that of Phenylalanine--tRNA ligase beta subunit from Rhodopirellula baltica (strain DSM 10527 / NCIMB 13988 / SH1).